Reading from the N-terminus, the 249-residue chain is Tetraspanin-7 (249 aa).

Residues Met-1 to Lys-16 are Cytoplasmic-facing. The chain crosses the membrane as a helical span at residues Thr-17–Gly-40. Residues Lys-41–Thr-56 are Extracellular-facing. An N-linked (GlcNAc...) asparagine glycan is attached at Asn-54. Residues Asn-57–Phe-75 form a helical membrane-spanning segment. At Gly-76–Trp-86 the chain is on the cytoplasmic side. A helical transmembrane segment spans residues Met-87–Phe-112. The Extracellular segment spans residues Arg-113–Met-213. Residues Asn-155, Asn-158, Asn-177, and Asn-188 are each glycosylated (N-linked (GlcNAc...) asparagine). The chain crosses the membrane as a helical span at residues Gly-214 to Ala-234. The Cytoplasmic segment spans residues Cys-235–Val-249.

This sequence belongs to the tetraspanin (TM4SF) family.

The protein localises to the membrane. Functionally, may be involved in cell proliferation and cell motility. This chain is Tetraspanin-7 (Tspan7), found in Mus musculus (Mouse).